The following is a 149-amino-acid chain: Transcriptional repressor NrdR (149 aa).

The segment at 3–34 (CPFCGANDTKVIDSRLVADGHQVRRRRQCLAC) is a zinc-finger region. The ATP-cone domain occupies 49–139 (PRVIKTDGNR…VYRSFEDIRE (91 aa)).

It belongs to the NrdR family. Zn(2+) is required as a cofactor.

Its function is as follows. Negatively regulates transcription of bacterial ribonucleotide reductase nrd genes and operons by binding to NrdR-boxes. The polypeptide is Transcriptional repressor NrdR (Photobacterium profundum (strain SS9)).